The chain runs to 208 residues: Large ribosomal subunit protein uL4 (208 aa).

Positions serine 42 to isoleucine 77 are disordered.

The protein belongs to the universal ribosomal protein uL4 family. Part of the 50S ribosomal subunit.

Its function is as follows. One of the primary rRNA binding proteins, this protein initially binds near the 5'-end of the 23S rRNA. It is important during the early stages of 50S assembly. It makes multiple contacts with different domains of the 23S rRNA in the assembled 50S subunit and ribosome. Forms part of the polypeptide exit tunnel. The polypeptide is Large ribosomal subunit protein uL4 (Spiroplasma kunkelii).